The following is a 403-amino-acid chain: D-mannonate dehydratase CC0532 (403 aa).

Residues Asn38 and His123 each coordinate substrate. Tyr160 functions as the Proton donor/acceptor in the catalytic mechanism. Asp211 serves as a coordination point for Mg(2+). The Proton donor/acceptor role is filled by His213. Mg(2+)-binding residues include Glu237 and Glu263. Substrate is bound by residues Glu263, Arg284, His313, Asp317, and Glu340.

This sequence belongs to the mandelate racemase/muconate lactonizing enzyme family. GalD subfamily. The cofactor is Mg(2+).

It carries out the reaction D-mannonate = 2-dehydro-3-deoxy-D-gluconate + H2O. Its pathway is carbohydrate metabolism; pentose and glucuronate interconversion. Functionally, catalyzes the dehydration of D-mannonate. Has no detectable activity with a panel of 70 other acid sugars (in vitro). This chain is D-mannonate dehydratase CC0532, found in Caulobacter vibrioides (strain ATCC 19089 / CIP 103742 / CB 15) (Caulobacter crescentus).